A 493-amino-acid polypeptide reads, in one-letter code: 3-octaprenyl-4-hydroxybenzoate carboxy-lyase (493 aa).

Asparagine 172 lines the Mn(2+) pocket. Prenylated FMN is bound by residues 175 to 177 (IYR), 189 to 191 (RWL), and 194 to 195 (RG). Glutamate 238 serves as a coordination point for Mn(2+). Aspartate 287 functions as the Proton donor in the catalytic mechanism.

The protein belongs to the UbiD family. In terms of assembly, homohexamer. Prenylated FMN serves as cofactor. The cofactor is Mn(2+).

The protein localises to the cell membrane. The catalysed reaction is a 4-hydroxy-3-(all-trans-polyprenyl)benzoate + H(+) = a 2-(all-trans-polyprenyl)phenol + CO2. Its pathway is cofactor biosynthesis; ubiquinone biosynthesis. In terms of biological role, catalyzes the decarboxylation of 3-octaprenyl-4-hydroxy benzoate to 2-octaprenylphenol, an intermediate step in ubiquinone biosynthesis. The sequence is that of 3-octaprenyl-4-hydroxybenzoate carboxy-lyase from Shewanella halifaxensis (strain HAW-EB4).